The primary structure comprises 497 residues: Cobyric acid synthase (497 aa).

In terms of domain architecture, GATase cobBQ-type spans 257–431 (WLRVAAVRLP…WHGLLDNDDF (175 aa)). The active-site Nucleophile is the cysteine 338. Histidine 423 is a catalytic residue.

The protein belongs to the CobB/CobQ family. CobQ subfamily.

The protein operates within cofactor biosynthesis; adenosylcobalamin biosynthesis. Catalyzes amidations at positions B, D, E, and G on adenosylcobyrinic A,C-diamide. NH(2) groups are provided by glutamine, and one molecule of ATP is hydrogenolyzed for each amidation. This chain is Cobyric acid synthase, found in Mycolicibacterium paratuberculosis (strain ATCC BAA-968 / K-10) (Mycobacterium paratuberculosis).